The primary structure comprises 290 residues: uncharacterized protein (290 aa).

The 61-residue stretch at 1–61 (MVMNMNHLHI…RDKHHGLMLT (61 aa)) folds into the HTH lysR-type domain. A DNA-binding region (H-T-H motif) is located at residues 20–39 (ITEAAKELFISQPAVSKAIK).

The protein belongs to the LysR transcriptional regulatory family.

This is an uncharacterized protein from Bacillus subtilis (strain 168).